A 331-amino-acid polypeptide reads, in one-letter code: 6-phosphogluconolactonase (331 aa).

At K287 the chain carries N6-acetyllysine.

This sequence belongs to the cycloisomerase 2 family.

It carries out the reaction 6-phospho-D-glucono-1,5-lactone + H2O = 6-phospho-D-gluconate + H(+). Its pathway is carbohydrate degradation; pentose phosphate pathway; D-ribulose 5-phosphate from D-glucose 6-phosphate (oxidative stage): step 2/3. In terms of biological role, catalyzes the hydrolysis of 6-phosphogluconolactone to 6-phosphogluconate. This Escherichia coli (strain SMS-3-5 / SECEC) protein is 6-phosphogluconolactonase.